A 386-amino-acid chain; its full sequence is Terpene cyclase 6 (386 aa).

Positions 128, 276, and 280 each coordinate Mg(2+). A D(D/E)XX(D/E) motif motif is present at residues 128-132 (DDEID). The NSE motif motif lies at 276-284 (NEILSLQKE). The WxxxxxRY motif signature appears at 360–367 (WSYNCERY). 2 residues coordinate (2E,6E)-farnesyl diphosphate: R366 and Y367.

The protein belongs to the terpene synthase family. As to quaternary structure, homodimer. Requires Mg(2+) as cofactor.

The enzyme catalyses (2E,6E)-farnesyl diphosphate + H2O = trichobrasilenol + diphosphate. The catalysed reaction is (2E,6E)-farnesyl diphosphate = alpha-humulene + diphosphate. It catalyses the reaction (2E,6E)-farnesyl diphosphate = (-)-(E)-beta-caryophyllene + diphosphate. It carries out the reaction (2E,6E)-farnesyl diphosphate = (E)-2-epi-beta-caryophyllene + diphosphate. The enzyme catalyses (2E,6E)-farnesyl diphosphate + H2O = (+)-isoafricanol + diphosphate. The catalysed reaction is (2E,6E)-farnesyl diphosphate + H2O = (+)-(2S,3R,9R)-pristinol + diphosphate. It catalyses the reaction (2E,6E)-farnesyl diphosphate = african-3-ene + diphosphate. It carries out the reaction (2E,6E)-farnesyl diphosphate = african-1-ene + diphosphate. The protein operates within sesquiterpene biosynthesis. Its function is as follows. Terpene cyclase that is able to convert FPP into a mixture of sesquiterpene hydrocarbons and alcohols. The main product is trichobrasilenol. Additionally, side products include alpha-humulene, caryophyllene, 2-epi-caryophyllene, african-3-ene, african-1-ene, isoafricanol and pristinol. Does not accept GPP, GGPP, and GFPP as substrates. The sequence is that of Terpene cyclase 6 from Hypocrea atroviridis (Trichoderma atroviride).